The sequence spans 336 residues: Secreted effector protein SifA (336 aa).

An interaction with host PLEKHM2 region spans residues 1-330 (MPITIGNGFL…LHVRSEQQSG (330 aa)).

This sequence belongs to the Sif family. Interacts with host PLEKHM2. Interacts with SseJ; the interaction is indirect.

The protein localises to the secreted. It localises to the host cytoplasm. The protein resides in the host cell membrane. Functionally, effector proteins function to alter host cell physiology and promote bacterial survival in host tissues. This protein is required for endosomal tubulation and formation of Salmonella-induced filaments (Sifs), which are filamentous structures containing lysosomal membrane glycoproteins within epithelial cells. Sif formation is concomitant with intracellular bacterial replication. The polypeptide is Secreted effector protein SifA (sifA) (Salmonella typhimurium (strain LT2 / SGSC1412 / ATCC 700720)).